The sequence spans 207 residues: Guanylate kinase (207 aa).

The 180-residue stretch at 6 to 185 (GLLIVLSGPS…AKERIQSIVE (180 aa)) folds into the Guanylate kinase-like domain. 13 to 20 (GPSGVGKG) serves as a coordination point for ATP.

Belongs to the guanylate kinase family.

It is found in the cytoplasm. It catalyses the reaction GMP + ATP = GDP + ADP. Its function is as follows. Essential for recycling GMP and indirectly, cGMP. This chain is Guanylate kinase, found in Staphylococcus haemolyticus (strain JCSC1435).